Here is a 387-residue protein sequence, read N- to C-terminus: uncharacterized protein (387 aa).

This is an uncharacterized protein from Escherichia coli (strain K12).